Here is a 1004-residue protein sequence, read N- to C-terminus: Glutamate [NMDA] receptor subunit 1 (1004 aa).

An N-terminal signal peptide occupies residues 1-39 (MAGTDSPAAARFVYRCLLFAPAIVVGLLLPLTLPPIAAA). The Extracellular segment spans residues 40–585 (QRHTASDNPS…TLVSFLQPFS (546 aa)). N-linked (GlcNAc...) asparagine glycans are attached at residues asparagine 270, asparagine 326, asparagine 357, asparagine 409, asparagine 466, asparagine 493, and asparagine 513. Residues 542 to 544 (PLT) and arginine 549 each bind glycine. A helical transmembrane segment spans residues 586-606 (NTLWILVMVSVHVVALVLYLL). The Cytoplasmic segment spans residues 607 to 663 (DRFSPFGRFKLSHSDSNEEKALNLSSAVWFAWGVLLNSGIGEGTPRSFSARVLGMVW). A helical transmembrane segment spans residues 664–684 (AGFAMIIVASYTANLAAFLVL). Topologically, residues 685–843 (ERPKTKLSGI…KTPNTLGLKN (159 aa)) are extracellular. N-linked (GlcNAc...) asparagine glycosylation is present at asparagine 705. Residues serine 715 and aspartate 759 each coordinate glycine. The helical transmembrane segment at 844–864 (MAGVFILVGVGIAGGVGLIII) threads the bilayer. Residues 865–1004 (EVIYKKHQVK…YTSDVSHLVV (140 aa)) lie on the Cytoplasmic side of the membrane. Residues 980–1004 (TRPQQNILPPRYSPGYTSDVSHLVV) are disordered. Residues 994-1004 (GYTSDVSHLVV) are compositionally biased toward polar residues.

Belongs to the glutamate-gated ion channel (TC 1.A.10.1) family. Forms a heteromeric NMDA channel with Nmdar2.

The protein localises to the cell membrane. It localises to the postsynaptic cell membrane. Its subcellular location is the postsynaptic density. Its function is as follows. NMDA receptor subtype of glutamate-gated ion channels with high calcium permeability and voltage-dependent sensitivity to magnesium. Mediated by glycine. This protein plays a key role in synaptic plasticity, synaptogenesis, excitotoxicity, memory acquisition and learning. It mediates neuronal functions in glutamate neurotransmission. Is involved in the cell surface targeting of NMDA receptors. Plays a role in associative learning and in long-term memory consolidation. The polypeptide is Glutamate [NMDA] receptor subunit 1 (Drosophila pseudoobscura pseudoobscura (Fruit fly)).